Here is a 763-residue protein sequence, read N- to C-terminus: Phosphoglycerol transferase I (763 aa).

The next 4 membrane-spanning stretches (helical) occupy residues 4 to 19, 26 to 48, 76 to 98, and 105 to 127; these read LLSFALFLASVLIYAW, WWFAATLTVLGLFVVLNITLFAS, YILPGIGIVLGLAAVFGALGWIL, and PHHFGYSLLALLLALGSVDASPA.

This sequence belongs to the OpgB family.

The protein localises to the cell inner membrane. The catalysed reaction is a phosphatidylglycerol + a membrane-derived-oligosaccharide D-glucose = a 1,2-diacyl-sn-glycerol + a membrane-derived-oligosaccharide 6-(glycerophospho)-D-glucose.. The protein operates within glycan metabolism; osmoregulated periplasmic glucan (OPG) biosynthesis. Transfers a phosphoglycerol residue from phosphatidylglycerol to the membrane-bound nascent glucan backbones. This chain is Phosphoglycerol transferase I, found in Escherichia coli O6:H1 (strain CFT073 / ATCC 700928 / UPEC).